Reading from the N-terminus, the 308-residue chain is Ribosomal protein L11 methyltransferase (308 aa).

S-adenosyl-L-methionine contacts are provided by T160, G181, D203, and N245.

The protein belongs to the methyltransferase superfamily. PrmA family.

It localises to the cytoplasm. It carries out the reaction L-lysyl-[protein] + 3 S-adenosyl-L-methionine = N(6),N(6),N(6)-trimethyl-L-lysyl-[protein] + 3 S-adenosyl-L-homocysteine + 3 H(+). In terms of biological role, methylates ribosomal protein L11. In Thermoanaerobacter pseudethanolicus (strain ATCC 33223 / 39E) (Clostridium thermohydrosulfuricum), this protein is Ribosomal protein L11 methyltransferase.